Consider the following 467-residue polypeptide: Cytochrome P450 85A3 (467 aa).

Residues 2 to 22 (AIFLIIFVVFFGFCILSTPLF) form a helical membrane-spanning segment. Position 417 (Cys-417) interacts with heme.

This sequence belongs to the cytochrome P450 family. The cofactor is heme. As to expression, expressed in fruits.

It localises to the membrane. The enzyme catalyses 6-deoxocastasterone + reduced [NADPH--hemoprotein reductase] + O2 = 6alpha-hydroxycastasterone + oxidized [NADPH--hemoprotein reductase] + H2O + H(+). It catalyses the reaction 6alpha-hydroxycastasterone + reduced [NADPH--hemoprotein reductase] + O2 = castasterone + oxidized [NADPH--hemoprotein reductase] + 2 H2O + H(+). The catalysed reaction is castasterone + reduced [NADPH--hemoprotein reductase] + O2 = brassinolide + oxidized [NADPH--hemoprotein reductase] + H2O + H(+). It carries out the reaction 6-deoxocastasterone + 2 reduced [NADPH--hemoprotein reductase] + 2 O2 = castasterone + 2 oxidized [NADPH--hemoprotein reductase] + 3 H2O + 2 H(+). Its pathway is plant hormone biosynthesis; brassinosteroid biosynthesis. In terms of biological role, catalyzes the C6-oxidation step in brassinosteroids biosynthesis. Converts 6-deoxocastasterone (6-deoxoCS) to castasterone (CS), and castasterone (CS) to brassinolide (BL). In Solanum lycopersicum (Tomato), this protein is Cytochrome P450 85A3.